Consider the following 364-residue polypeptide: tRNA 2-selenouridine synthase (364 aa).

A Rhodanese domain is found at 14-136 (VLNNTPLIDV…AFRNWLMQET (123 aa)). C97 (S-selanylcysteine intermediate) is an active-site residue.

This sequence belongs to the SelU family. In terms of assembly, monomer.

It carries out the reaction 5-methylaminomethyl-2-thiouridine(34) in tRNA + selenophosphate + (2E)-geranyl diphosphate + H2O + H(+) = 5-methylaminomethyl-2-selenouridine(34) in tRNA + (2E)-thiogeraniol + phosphate + diphosphate. It catalyses the reaction 5-methylaminomethyl-2-thiouridine(34) in tRNA + (2E)-geranyl diphosphate = 5-methylaminomethyl-S-(2E)-geranyl-thiouridine(34) in tRNA + diphosphate. The catalysed reaction is 5-methylaminomethyl-S-(2E)-geranyl-thiouridine(34) in tRNA + selenophosphate + H(+) = 5-methylaminomethyl-2-(Se-phospho)selenouridine(34) in tRNA + (2E)-thiogeraniol. The enzyme catalyses 5-methylaminomethyl-2-(Se-phospho)selenouridine(34) in tRNA + H2O = 5-methylaminomethyl-2-selenouridine(34) in tRNA + phosphate. Its function is as follows. Involved in the post-transcriptional modification of the uridine at the wobble position (U34) of tRNA(Lys), tRNA(Glu) and tRNA(Gln). Catalyzes the conversion of 2-thiouridine (S2U-RNA) to 2-selenouridine (Se2U-RNA). Acts in a two-step process involving geranylation of 2-thiouridine (S2U) to S-geranyl-2-thiouridine (geS2U) and subsequent selenation of the latter derivative to 2-selenouridine (Se2U) in the tRNA chain. In Sulfurovum sp. (strain NBC37-1), this protein is tRNA 2-selenouridine synthase.